The chain runs to 1129 residues: Phytochrome A (1129 aa).

The region spanning 217 to 399 (SMERLCDTMV…VFAIHVSKEL (183 aa)) is the GAF domain. Residue C322 participates in phytochromobilin binding. 2 PAS domains span residues 622–692 (VTSE…LQGK) and 755–826 (DYKA…VNLG). Positions 906 to 1123 (YLRRQAKNPL…TFIITVELAA (218 aa)) constitute a Histidine kinase domain.

It belongs to the phytochrome family. As to quaternary structure, homodimer. In terms of processing, contains one covalently linked phytochromobilin chromophore.

Regulatory photoreceptor which exists in two forms that are reversibly interconvertible by light: the Pr form that absorbs maximally in the red region of the spectrum and the Pfr form that absorbs maximally in the far-red region. Photoconversion of Pr to Pfr induces an array of morphogenic responses, whereas reconversion of Pfr to Pr cancels the induction of those responses. Pfr controls the expression of a number of nuclear genes including those encoding the small subunit of ribulose-bisphosphate carboxylase, chlorophyll A/B binding protein, protochlorophyllide reductase, rRNA, etc. It also controls the expression of its own gene(s) in a negative feedback fashion. This Petroselinum crispum (Parsley) protein is Phytochrome A (PHYA).